We begin with the raw amino-acid sequence, 241 residues long: Large ribosomal subunit protein uL3 (241 aa).

Disordered regions lie at residues 140 to 162 (SHRS…NKKM) and 217 to 241 (PLPG…EETA). Glutamine 151 is subject to N5-methylglutamine. A compositionally biased stretch (low complexity) spans 229 to 241 (APATEAPAAEETA).

The protein belongs to the universal ribosomal protein uL3 family. As to quaternary structure, part of the 50S ribosomal subunit. Forms a cluster with proteins L14 and L19. In terms of processing, methylated by PrmB.

Its function is as follows. One of the primary rRNA binding proteins, it binds directly near the 3'-end of the 23S rRNA, where it nucleates assembly of the 50S subunit. This is Large ribosomal subunit protein uL3 from Methylobacterium radiotolerans (strain ATCC 27329 / DSM 1819 / JCM 2831 / NBRC 15690 / NCIMB 10815 / 0-1).